A 175-amino-acid chain; its full sequence is GTP-dependent dephospho-CoA kinase (175 aa).

GTP-binding residues include D48, V49, V50, D66, and E124.

Belongs to the GTP-dependent DPCK family.

The catalysed reaction is 3'-dephospho-CoA + GTP = GDP + CoA + H(+). The protein operates within cofactor biosynthesis; coenzyme A biosynthesis. Functionally, catalyzes the GTP-dependent phosphorylation of the 3'-hydroxyl group of dephosphocoenzyme A to form coenzyme A (CoA). This chain is GTP-dependent dephospho-CoA kinase, found in Thermofilum pendens (strain DSM 2475 / Hrk 5).